The sequence spans 432 residues: Enolase (432 aa).

Gln-167 provides a ligand contact to (2R)-2-phosphoglycerate. Catalysis depends on Glu-209, which acts as the Proton donor. Residues Asp-246, Glu-289, and Asp-316 each coordinate Mg(2+). (2R)-2-phosphoglycerate contacts are provided by Lys-341, Arg-370, Ser-371, and Lys-392. Lys-341 functions as the Proton acceptor in the catalytic mechanism.

Belongs to the enolase family. Mg(2+) serves as cofactor.

It localises to the cytoplasm. Its subcellular location is the secreted. The protein resides in the cell surface. It catalyses the reaction (2R)-2-phosphoglycerate = phosphoenolpyruvate + H2O. The protein operates within carbohydrate degradation; glycolysis; pyruvate from D-glyceraldehyde 3-phosphate: step 4/5. Functionally, catalyzes the reversible conversion of 2-phosphoglycerate (2-PG) into phosphoenolpyruvate (PEP). It is essential for the degradation of carbohydrates via glycolysis. In Petrotoga mobilis (strain DSM 10674 / SJ95), this protein is Enolase.